The chain runs to 811 residues: Lon protease 1 (811 aa).

The region spanning Leu15–Ile212 is the Lon N-terminal domain. ATP is bound at residue Gly376 to Thr383. The region spanning Tyr613 to Leu794 is the Lon proteolytic domain. Active-site residues include Ser700 and Lys743.

It belongs to the peptidase S16 family. As to quaternary structure, homohexamer. Organized in a ring with a central cavity.

Its subcellular location is the cytoplasm. It catalyses the reaction Hydrolysis of proteins in presence of ATP.. ATP-dependent serine protease that mediates the selective degradation of mutant and abnormal proteins as well as certain short-lived regulatory proteins. Required for cellular homeostasis and for survival from DNA damage and developmental changes induced by stress. Degrades polypeptides processively to yield small peptide fragments that are 5 to 10 amino acids long. Binds to DNA in a double-stranded, site-specific manner. This chain is Lon protease 1, found in Sorangium cellulosum (strain So ce56) (Polyangium cellulosum (strain So ce56)).